Here is a 172-residue protein sequence, read N- to C-terminus: Peptide deformylase (172 aa).

The Fe cation site is built by Cys91 and His133. Glu134 is an active-site residue. His137 serves as a coordination point for Fe cation.

Belongs to the polypeptide deformylase family. The cofactor is Fe(2+).

The enzyme catalyses N-terminal N-formyl-L-methionyl-[peptide] + H2O = N-terminal L-methionyl-[peptide] + formate. Functionally, removes the formyl group from the N-terminal Met of newly synthesized proteins. Requires at least a dipeptide for an efficient rate of reaction. N-terminal L-methionine is a prerequisite for activity but the enzyme has broad specificity at other positions. The chain is Peptide deformylase from Vibrio campbellii (strain ATCC BAA-1116).